Reading from the N-terminus, the 152-residue chain is Deoxyuridine 5'-triphosphate nucleotidohydrolase (152 aa).

Residues 72–74 (RSG), Asn-85, and 89–91 (TID) contribute to the substrate site.

Belongs to the dUTPase family. Mg(2+) is required as a cofactor.

The catalysed reaction is dUTP + H2O = dUMP + diphosphate + H(+). It participates in pyrimidine metabolism; dUMP biosynthesis; dUMP from dCTP (dUTP route): step 2/2. This enzyme is involved in nucleotide metabolism: it produces dUMP, the immediate precursor of thymidine nucleotides and it decreases the intracellular concentration of dUTP so that uracil cannot be incorporated into DNA. This Rhodopseudomonas palustris (strain BisB5) protein is Deoxyuridine 5'-triphosphate nucleotidohydrolase.